A 134-amino-acid chain; its full sequence is Global transcriptional regulator Spx (134 aa).

Cysteine 10 and cysteine 13 are joined by a disulfide.

The protein belongs to the ArsC family. Spx subfamily. As to quaternary structure, interacts with the C-terminal domain of the alpha subunit of the RNAP.

The protein localises to the cytoplasm. Functionally, global transcriptional regulator that plays a key role in stress response and exerts either positive or negative regulation of genes. Acts by interacting with the C-terminal domain of the alpha subunit of the RNA polymerase (RNAP). This interaction can enhance binding of RNAP to the promoter region of target genes and stimulate their transcription, or block interaction of RNAP with activator. The chain is Global transcriptional regulator Spx from Streptococcus pyogenes serotype M6 (strain ATCC BAA-946 / MGAS10394).